The following is a 527-amino-acid chain: MSTYGTLLKVTSYGESHGKAIGCVIDGFLSNIEINFDLIQKQLDRRRPNQSKLTSNRNEKDKLVILSGFDENKTLGTPITFLIYNEDIKKEDYNSFINIPRPGHGDYTYFMKYHVKNKSGSSRFSGRETATRVAAGACIEQWLYKSYNCSIVSYVHSVGNIKIPEQVSKELENKNPPSRDLVDSYGTVRYNEKEKIFMDCFNRIYDMNASMLKTDEYNKNTLTIPSIDNTYINVKTNECNINQVDNNHNNYINDKDNTFNNSEKSDEWIYLQTRCPHPYTAVQICSYILKLKNKGDSVGGIATCIIQNPPIGIGEPIFDKLEAELAKMILSIPAVKGIEFGSGFNGTYMFGSMHNDIFIPVENMSTKKESDLLYDDKGECKNMSYHSTIQNNEDQILNSTKGFMPPKNDKNFNNIDDYNVTFNNNEEKLLITKTNNCGGILAGISTGNNIVFRSAIKPVSSIQIEKETSDFYGNMCNLKVQGRHDSCILPRLPPIIEASSSMVIGDLILRQISKYGDKKLPTLFRNM.

Residues His-17, His-104, and Asp-485 contribute to the active site.

Belongs to the chorismate synthase family.

Its subcellular location is the cytoplasm. The protein resides in the cytosol. It catalyses the reaction 5-O-(1-carboxyvinyl)-3-phosphoshikimate = chorismate + phosphate. It carries out the reaction FMNH2 + NADP(+) = FMN + NADPH + 2 H(+). It functions in the pathway metabolic intermediate biosynthesis; chorismate biosynthesis; chorismate from D-erythrose 4-phosphate and phosphoenolpyruvate: step 7/7. Bifunctional chorismate synthase and flavin reductase. Catalyzes the conversion of 5-enolpyruvylshikimate 3-phosphate (EPSP) to form chorismate. Acts also as a flavin reductase (FR) able to generate reduced flavin mononucleotide in the presence of NADPH. The chain is Chorismate synthase from Plasmodium falciparum (isolate 3D7).